A 387-amino-acid chain; its full sequence is Chaperone protein DnaJ (387 aa).

Positions 5 to 70 constitute a J domain; it reads DYYEILEVSA…QKRQAYDQFG (66 aa). A CR-type zinc finger spans residues 130–208; sequence GTTVDVRIPT…CRGEGYKHSS (79 aa). 8 residues coordinate Zn(2+): Cys143, Cys146, Cys160, Cys163, Cys182, Cys185, Cys196, and Cys199. CXXCXGXG motif repeat units lie at residues 143 to 150, 160 to 167, 182 to 189, and 196 to 203; these read CESCDGSG, CPTCQGIG, CPNCHGTG, and CKTCRGEG.

Belongs to the DnaJ family. Homodimer. It depends on Zn(2+) as a cofactor.

It localises to the cytoplasm. Functionally, participates actively in the response to hyperosmotic and heat shock by preventing the aggregation of stress-denatured proteins and by disaggregating proteins, also in an autonomous, DnaK-independent fashion. Unfolded proteins bind initially to DnaJ; upon interaction with the DnaJ-bound protein, DnaK hydrolyzes its bound ATP, resulting in the formation of a stable complex. GrpE releases ADP from DnaK; ATP binding to DnaK triggers the release of the substrate protein, thus completing the reaction cycle. Several rounds of ATP-dependent interactions between DnaJ, DnaK and GrpE are required for fully efficient folding. Also involved, together with DnaK and GrpE, in the DNA replication of plasmids through activation of initiation proteins. The polypeptide is Chaperone protein DnaJ (Hydrogenovibrio crunogenus (strain DSM 25203 / XCL-2) (Thiomicrospira crunogena)).